The primary structure comprises 132 residues: Small ribosomal subunit protein uS8 (132 aa).

This sequence belongs to the universal ribosomal protein uS8 family. As to quaternary structure, part of the 30S ribosomal subunit. Contacts proteins S5 and S12.

Functionally, one of the primary rRNA binding proteins, it binds directly to 16S rRNA central domain where it helps coordinate assembly of the platform of the 30S subunit. The polypeptide is Small ribosomal subunit protein uS8 (Exiguobacterium sibiricum (strain DSM 17290 / CCUG 55495 / CIP 109462 / JCM 13490 / 255-15)).